The chain runs to 212 residues: Dephospho-CoA kinase (212 aa).

The 205-residue stretch at 8–212 (LVGVTGGLGS…QLLQQAMLRR (205 aa)) folds into the DPCK domain. 16-21 (GSGKSM) is a binding site for ATP.

This sequence belongs to the CoaE family.

It localises to the cytoplasm. The catalysed reaction is 3'-dephospho-CoA + ATP = ADP + CoA + H(+). The protein operates within cofactor biosynthesis; coenzyme A biosynthesis; CoA from (R)-pantothenate: step 5/5. In terms of biological role, catalyzes the phosphorylation of the 3'-hydroxyl group of dephosphocoenzyme A to form coenzyme A. The sequence is that of Dephospho-CoA kinase from Chlorobium chlorochromatii (strain CaD3).